A 277-amino-acid polypeptide reads, in one-letter code: Protein G1-like2 (277 aa).

Residues 1 to 16 show a composition bias toward gly residues; the sequence is MQGGGGGDSSGGGGGE. Disordered stretches follow at residues 1-28, 141-203, and 225-245; these read MQGG…SQKR, RGIA…GHFF, and HQVS…TNTG. A compositionally biased stretch (basic and acidic residues) spans 19–28; sequence RPSRYESQKR. The 128-residue stretch at 22–149 folds into the ALOG domain; sequence RYESQKRRDW…ARGIAYEKKR (128 aa). A Nuclear localization signal motif is present at residues 147–151; sequence KKRRK. Over residues 154 to 177 the composition is skewed to low complexity; sequence PTSSSSSQAAAAAAAATSPASPAA. Positions 178–187 are enriched in pro residues; the sequence is SPTPPPPPPT.

This sequence belongs to the plant homeotic and developmental regulators ALOG protein family.

The protein resides in the nucleus. In terms of biological role, probable transcription regulator that acts as a developmental regulator by promoting cell growth in response to light. The protein is Protein G1-like2 (G1L2) of Oryza sativa subsp. japonica (Rice).